A 55-amino-acid polypeptide reads, in one-letter code: MFRLGVFLLTFLLLVSMATSEYSRGRIMARASECVNECVESGHNTFHCERHCSNT.

The N-terminal stretch at 1–20 (MFRLGVFLLTFLLLVSMATS) is a signal peptide. 2 cysteine pairs are disulfide-bonded: Cys34–Cys48 and Cys38–Cys52.

Expressed by the venom duct.

It localises to the secreted. Its function is as follows. Probable neurotoxin. The chain is Conotoxin Cal14.14 from Californiconus californicus (California cone).